A 752-amino-acid chain; its full sequence is Reticulon-1-B (752 aa).

Disordered stretches follow at residues 1 to 57 (MAAN…TSTD), 264 to 319 (EYPG…SEKQ), 334 to 424 (KAKE…SPSI), and 444 to 465 (ESCDGSSASEESPKRDPDSPMM). Residues 264-273 (EYPGNQQGKS) are compositionally biased toward polar residues. Positions 334–361 (KAKEGTKRFSSETNDEKQSRSFHAEKQD) are enriched in basic and acidic residues. The segment covering 363–383 (TVMSTEATSASHYTKASSAES) has biased composition (polar residues). A Reticulon domain is found at 566-752 (AIDLLYWRDV…AKIPGTKQKE (187 aa)). 2 helical membrane passes run 580–600 (IVFGSILLMLFSLTLFSVVSV) and 684–704 (VLMWLLTYVGALFNGLTLLIM).

As to expression, isoform A and isoform C are both expressed in the animal hemisphere (presumptive neural ectoderm) of blastula and gastrula stage embryos, and along the anterior neural border, in the panplacodal primordium, and in the dorsolateral side of archenteron roof of late neurula embryos. At the tailbud stage, expression of the isoforms begin to differ. Isoform A localizes to the cranial placodes including the trigeminal placode, lateral line placode, olfactory placode and otic vesicle. Isoform C localizes to the central nervous system, including the spinal cord, prosencephalon, mesencephalon and rhombencephalon, as well as the lateral line placode, otic vesicle and pronephros.

It is found in the endoplasmic reticulum membrane. Its subcellular location is the nucleus. Its function is as follows. Inhibits amyloid precursor protein processing, probably by blocking BACE1 activity. The sequence is that of Reticulon-1-B (rtn1-b) from Xenopus laevis (African clawed frog).